A 278-amino-acid polypeptide reads, in one-letter code: Inositol oxygenase (278 aa).

Substrate is bound by residues Arg-22 and 78-80; that span reads DES. Fe cation contacts are provided by His-91, His-116, and Asp-117. Substrate-binding positions include Lys-120 and 134-135; that span reads GD. Residues His-187, His-213, and Asp-246 each contribute to the Fe cation site. 213–214 provides a ligand contact to substrate; that stretch reads HS.

It belongs to the myo-inositol oxygenase family. It depends on Fe cation as a cofactor.

Its subcellular location is the cytoplasm. It carries out the reaction myo-inositol + O2 = D-glucuronate + H2O + H(+). It participates in polyol metabolism; myo-inositol degradation into D-glucuronate; D-glucuronate from myo-inositol: step 1/1. The polypeptide is Inositol oxygenase (miox) (Danio rerio (Zebrafish)).